Reading from the N-terminus, the 99-residue chain is Malonate decarboxylase acyl carrier protein (99 aa).

An O-(phosphoribosyl dephospho-coenzyme A)serine modification is found at S25.

The protein belongs to the MdcC family. Covalently binds the prosthetic group of malonate decarboxylase.

It is found in the cytoplasm. Functionally, subunit of malonate decarboxylase, it is an acyl carrier protein to which acetyl and malonyl thioester residues are bound via a 2'-(5''-phosphoribosyl)-3'-dephospho-CoA prosthetic group and turn over during the catalytic mechanism. The sequence is that of Malonate decarboxylase acyl carrier protein from Pseudomonas aeruginosa (strain LESB58).